A 64-amino-acid polypeptide reads, in one-letter code: Large ribosomal subunit protein eL37 (64 aa).

Positions 20, 23, 35, and 38 each coordinate Zn(2+). The segment at 20–38 (CRRCGRRSFHVRKKVCAAC) adopts a C4-type zinc-finger fold.

This sequence belongs to the eukaryotic ribosomal protein eL37 family. It depends on Zn(2+) as a cofactor.

Its function is as follows. Binds to the 23S rRNA. The chain is Large ribosomal subunit protein eL37 from Methanococcus maripaludis (strain C5 / ATCC BAA-1333).